A 387-amino-acid polypeptide reads, in one-letter code: Adaptive-response sensory kinase SasA (387 aa).

Residues 1–97 are interacts with KaiC; sequence MGESLSPQAL…TDQLANQLPQ (97 aa). One can recognise a Histidine kinase domain in the interval 158–382; it reads LVAHDLRNPL…TFHFTMPVYR (225 aa). His-161 bears the Phosphohistidine; by autocatalysis mark.

As to quaternary structure, homooligomerizes. Part of the circadian clock (KaiA, KaiB, KaiC, CikA, RpaA, SasA), the composition of which varies during the circadian cycle. Binds to the CI domain of KaiC; KaiB(fs) and SasA compete for the binding site. Binds preferentially to doubly phosphorylated KaiC. Interacts with LdpA. Post-translationally, autophosphorylates in vitro.

The enzyme catalyses ATP + protein L-histidine = ADP + protein N-phospho-L-histidine.. Its function is as follows. Member of the two-component regulatory system SasA/RpaA involved in genome-wide circadian gene expression. One of three clock output pathways. Participates in the KaiABC clock protein complex, which constitutes the main circadian regulator in cyanobacteria, via its interaction with KaiC. Required for robustness of the circadian rhythm of gene expression and involved in clock output. KaiC enhances the autophosphorylation activity of SasA, which then transfers its phosphate group to RpaA to activate it. Phosphotransfer is maximal when KaiC phosphorylation is active during the circadian cycle; this two-component system is activated by fully phosphorylated KaiC. A very robust clock is reconstituted with KaiA, KaiB, KaiC, SasA, CikA and RpaA; output is measured by transcription from an appropriate reporter. In addition to its output function, recruits fold-shifted KaiB (KaiB(fs)) to KaiC to cooperatively form the KaiB(6):KaiC(6) complex (independent of SasA kinase activity); at physiological concentrations increases their association. At higher concentrations SasA and KaiB(fs) compete to bind to KaiC. Mutations that decrease cooperativity nearly phenocopy a deletion mutation. Functionally, autophosphorylation and phosphotransfer activities are not essential for clock rhythms in continuous light, but they are essential for adaptation to light/dark cycles. In Synechococcus elongatus (strain ATCC 33912 / PCC 7942 / FACHB-805) (Anacystis nidulans R2), this protein is Adaptive-response sensory kinase SasA.